A 98-amino-acid polypeptide reads, in one-letter code: DNA-binding protein Fis (98 aa).

A DNA-binding region (H-T-H motif) is located at residues 74 to 93; the sequence is QTRAAQMMGINRGTLRKKLK.

It belongs to the transcriptional regulatory Fis family. In terms of assembly, homodimer.

Functionally, activates ribosomal RNA transcription. Plays a direct role in upstream activation of rRNA promoters. The polypeptide is DNA-binding protein Fis (Proteus hauseri).